The sequence spans 285 residues: Protein pxr1 (285 aa).

The span at 1–11 (MGLAAPRKKIK) shows a compositional bias: basic residues. The segment at 1 to 23 (MGLAAPRKKIKISHDPNNTNWSR) is disordered. The G-patch domain occupies 25 to 79 (TSGFGHKILSSQGWTPGSFLGARNAAHAEMFTAASASHIKVVLKDDTLGLGARPK). The interval 144-263 (TPIVTEEPQG…MGRHVFRGRH (120 aa)) is disordered. Over residues 152 to 163 (QGIHKDKQEDKL) the composition is skewed to basic and acidic residues. Over residues 190-208 (KKKKSKSKNHREKKDRKRK) the composition is skewed to basic residues. Positions 224 to 234 (RSTEKKSKATR) are enriched in basic and acidic residues. Residues 254 to 263 (MGRHVFRGRH) show a composition bias toward basic residues.

This sequence belongs to the PINX1 family.

The protein resides in the nucleus. It localises to the nucleolus. Involved in rRNA-processing at A0, A1 and A2 sites and negatively regulates telomerase. This is Protein pxr1 (pxr1) from Aspergillus niger (strain ATCC MYA-4892 / CBS 513.88 / FGSC A1513).